We begin with the raw amino-acid sequence, 127 residues long: MAYAIIEASDKQLWVEPGRFYDLDRLDADLDQSLTLDKVLLVQDEGAPQIGQPYVAGATVQVTVLSHPRGRKVTVYKMTPKKKTRKKQGHRQDLTRVLVESITVGGKVLTANAADLPKSEADIDAAG.

Belongs to the bacterial ribosomal protein bL21 family. Part of the 50S ribosomal subunit. Contacts protein L20.

This protein binds to 23S rRNA in the presence of protein L20. The sequence is that of Large ribosomal subunit protein bL21 from Synechococcus sp. (strain ATCC 27144 / PCC 6301 / SAUG 1402/1) (Anacystis nidulans).